The chain runs to 338 residues: Holliday junction branch migration complex subunit RuvB (338 aa).

Residues 4–187 (ADRLIHAEPQ…FGIPLRLEFY (184 aa)) are large ATPase domain (RuvB-L). ATP contacts are provided by residues R27, G68, K71, T72, T73, 134 to 136 (EDY), R177, Y187, and R224. A Mg(2+)-binding site is contributed by T72. A small ATPAse domain (RuvB-S) region spans residues 188–258 (NVKDLSSIVT…VAELALDMLD (71 aa)). The interval 261–338 (SEGFDYMDRK…RHFDIIQPEK (78 aa)) is head domain (RuvB-H). DNA contacts are provided by R297, R316, and R321.

Belongs to the RuvB family. As to quaternary structure, homohexamer. Forms an RuvA(8)-RuvB(12)-Holliday junction (HJ) complex. HJ DNA is sandwiched between 2 RuvA tetramers; dsDNA enters through RuvA and exits via RuvB. An RuvB hexamer assembles on each DNA strand where it exits the tetramer. Each RuvB hexamer is contacted by two RuvA subunits (via domain III) on 2 adjacent RuvB subunits; this complex drives branch migration. In the full resolvosome a probable DNA-RuvA(4)-RuvB(12)-RuvC(2) complex forms which resolves the HJ.

The protein localises to the cytoplasm. It carries out the reaction ATP + H2O = ADP + phosphate + H(+). Its function is as follows. The RuvA-RuvB-RuvC complex processes Holliday junction (HJ) DNA during genetic recombination and DNA repair, while the RuvA-RuvB complex plays an important role in the rescue of blocked DNA replication forks via replication fork reversal (RFR). RuvA specifically binds to HJ cruciform DNA, conferring on it an open structure. The RuvB hexamer acts as an ATP-dependent pump, pulling dsDNA into and through the RuvAB complex. RuvB forms 2 homohexamers on either side of HJ DNA bound by 1 or 2 RuvA tetramers; 4 subunits per hexamer contact DNA at a time. Coordinated motions by a converter formed by DNA-disengaged RuvB subunits stimulates ATP hydrolysis and nucleotide exchange. Immobilization of the converter enables RuvB to convert the ATP-contained energy into a lever motion, pulling 2 nucleotides of DNA out of the RuvA tetramer per ATP hydrolyzed, thus driving DNA branch migration. The RuvB motors rotate together with the DNA substrate, which together with the progressing nucleotide cycle form the mechanistic basis for DNA recombination by continuous HJ branch migration. Branch migration allows RuvC to scan DNA until it finds its consensus sequence, where it cleaves and resolves cruciform DNA. The chain is Holliday junction branch migration complex subunit RuvB from Shewanella woodyi (strain ATCC 51908 / MS32).